Reading from the N-terminus, the 1059-residue chain is Isoleucine--tRNA ligase (1059 aa).

The short motif at 47 to 57 is the 'HIGH' region element; that stretch reads PYTTGHIHLGT. Residues 591–595 carry the 'KMSKS' region motif; it reads KMSKS. Position 594 (K594) interacts with ATP.

This sequence belongs to the class-I aminoacyl-tRNA synthetase family. IleS type 2 subfamily. Monomer. The cofactor is Zn(2+).

It is found in the cytoplasm. It carries out the reaction tRNA(Ile) + L-isoleucine + ATP = L-isoleucyl-tRNA(Ile) + AMP + diphosphate. Catalyzes the attachment of isoleucine to tRNA(Ile). As IleRS can inadvertently accommodate and process structurally similar amino acids such as valine, to avoid such errors it has two additional distinct tRNA(Ile)-dependent editing activities. One activity is designated as 'pretransfer' editing and involves the hydrolysis of activated Val-AMP. The other activity is designated 'posttransfer' editing and involves deacylation of mischarged Val-tRNA(Ile). The polypeptide is Isoleucine--tRNA ligase (Methanoculleus marisnigri (strain ATCC 35101 / DSM 1498 / JR1)).